Reading from the N-terminus, the 904-residue chain is Anoctamin-5 (904 aa).

The Cytoplasmic segment spans residues 1 to 290; it reads MVEQEGLTAK…HLIRNYFGEK (290 aa). The helical transmembrane segment at 291–311 threads the bilayer; it reads IGIYFVFLGYYTEMLLFAALV. At 312–371 the chain is on the extracellular side; the sequence is GLACFIYGLLSMENNRTSTEICDPDIGGQMIMCPLCDEVCDYWRLNTTCLHSKFSHLFDN. N-linked (GlcNAc...) asparagine glycosylation is found at N326, N357, and N371. The helical transmembrane segment at 372–392 threads the bilayer; sequence ESTVFFALFMGIWVTLFLEFW. At 393 to 453 the chain is on the cytoplasmic side; sequence KQRQARLEYE…CHRIPWYFVS (61 aa). Residues 454 to 474 form a helical membrane-spanning segment; the sequence is GTTVTFGMALLLSSMVSILIY. The Extracellular segment spans residues 475-502; sequence RLSVFATFASFMESEATLQSVKSFFTPQ. Residues 503-523 form a helical membrane-spanning segment; the sequence is LATALSGSCLNCIVILILNFF. Over 524–548 the chain is Cytoplasmic; it reads YEKISAWITKMEIPRTHQEYESSLT. Residues 549–569 traverse the membrane as a helical segment; that stretch reads LKMFLFQFVNYYSSCFYVAFF. The Extracellular portion of the chain corresponds to 570–667; the sequence is KGKFVGYPGS…RGLFYEYLET (98 aa). Residues 668–688 traverse the membrane as a helical segment; it reads VIQFGFATLFVASFPLAPLFA. The Cytoplasmic portion of the chain corresponds to 689–723; it reads LMNNIMGIRVDAWKLTTQYRRPVAAKAHSIGVWQD. A helical membrane pass occupies residues 724-744; the sequence is ILFGMAIVSVATNAFIVSFTS. Residues 745–825 are Extracellular-facing; sequence DIIPRLVYFY…FWHVLAAKMT (81 aa). Residues N759, N769, and N782 are each glycosylated (N-linked (GlcNAc...) asparagine). A helical membrane pass occupies residues 826-846; sequence FIIVMEHVVFLFKFLLAWLIP. Over 847–904 the chain is Cytoplasmic; it reads DVPKDVVEKIKREKLMTIKIIHDFELNKLKENLDVEYGNIMKNVLVDEDNSLKAKTTV.

This sequence belongs to the anoctamin family. As to expression, highly expressed in skeletal muscle, bone tissues and thyroid gland.

The protein localises to the endoplasmic reticulum membrane. It localises to the cell membrane. Plays a role in plasma membrane repair in a process involving annexins. Does not exhibit calcium-activated chloride channel (CaCC) activity. The protein is Anoctamin-5 (Ano5) of Mus musculus (Mouse).